Here is a 258-residue protein sequence, read N- to C-terminus: Undecaprenyl-diphosphatase (258 aa).

A run of 8 helical transmembrane segments spans residues 14–34 (AAGEFLPISSSAHLVLMPWLL), 39–59 (QGLTYDIFLHLATLIAVLIYF), 79–99 (GKILWLLVLGTIPAAICGVLF), 106–126 (VFRSPFVIAAALIVFAVILHL), 136–156 (VALNVKTVLIIGCAQALALMP), 176–196 (AESAKISFLLSTPIIAGAAVL), 209–229 (AFIAGFLTAAIFGWLFIKFLM), and 237–257 (FNIFVVYRIALGVIIIITALM).

It belongs to the UppP family.

It localises to the cell membrane. The catalysed reaction is di-trans,octa-cis-undecaprenyl diphosphate + H2O = di-trans,octa-cis-undecaprenyl phosphate + phosphate + H(+). Catalyzes the dephosphorylation of undecaprenyl diphosphate (UPP). Confers resistance to bacitracin. The protein is Undecaprenyl-diphosphatase of Elusimicrobium minutum (strain Pei191).